Reading from the N-terminus, the 318-residue chain is Petal death protein (318 aa).

Positions 1–3 are cleaved as a propeptide — removed in mature form; it reads MAP. Residues 1–24 are disordered; that stretch reads MAPPNGTTNGETEVATQGSYTAVS. Aspartate 107, aspartate 109, and lysine 142 together coordinate Mg(2+).

The protein belongs to the isocitrate lyase/PEP mutase superfamily. In terms of assembly, homodimer and homotetramer formed by a dimer of homodimer. The cofactor is Mg(2+). Mn(2+) is required as a cofactor. It depends on Fe(2+) as a cofactor. Requires Co(2+) as cofactor. Accumulates in senescing flower petals.

The catalysed reaction is oxaloacetate + H2O = oxalate + acetate + H(+). In terms of biological role, catalyzes cleavage of the C(2)-C(3) bond in oxaloacetate and in (2R)-alkyl malate derivatives to form oxalate and acetate, and alkyl carboxylates and R-ketocarboxylates, respectively. The chain is Petal death protein from Dianthus caryophyllus (Carnation).